The following is a 177-amino-acid chain: ATP synthase subunit delta (177 aa).

This sequence belongs to the ATPase delta chain family. As to quaternary structure, F-type ATPases have 2 components, F(1) - the catalytic core - and F(0) - the membrane proton channel. F(1) has five subunits: alpha(3), beta(3), gamma(1), delta(1), epsilon(1). F(0) has three main subunits: a(1), b(2) and c(10-14). The alpha and beta chains form an alternating ring which encloses part of the gamma chain. F(1) is attached to F(0) by a central stalk formed by the gamma and epsilon chains, while a peripheral stalk is formed by the delta and b chains.

Its subcellular location is the cell inner membrane. Its function is as follows. F(1)F(0) ATP synthase produces ATP from ADP in the presence of a proton or sodium gradient. F-type ATPases consist of two structural domains, F(1) containing the extramembraneous catalytic core and F(0) containing the membrane proton channel, linked together by a central stalk and a peripheral stalk. During catalysis, ATP synthesis in the catalytic domain of F(1) is coupled via a rotary mechanism of the central stalk subunits to proton translocation. Functionally, this protein is part of the stalk that links CF(0) to CF(1). It either transmits conformational changes from CF(0) to CF(1) or is implicated in proton conduction. The chain is ATP synthase subunit delta from Aliivibrio fischeri (strain MJ11) (Vibrio fischeri).